The chain runs to 351 residues: Nicotinate-nucleotide--dimethylbenzimidazole phosphoribosyltransferase (351 aa).

Glu317 functions as the Proton acceptor in the catalytic mechanism.

It belongs to the CobT family.

The enzyme catalyses 5,6-dimethylbenzimidazole + nicotinate beta-D-ribonucleotide = alpha-ribazole 5'-phosphate + nicotinate + H(+). It participates in nucleoside biosynthesis; alpha-ribazole biosynthesis; alpha-ribazole from 5,6-dimethylbenzimidazole: step 1/2. Its function is as follows. Catalyzes the synthesis of alpha-ribazole-5'-phosphate from nicotinate mononucleotide (NAMN) and 5,6-dimethylbenzimidazole (DMB). The protein is Nicotinate-nucleotide--dimethylbenzimidazole phosphoribosyltransferase of Pseudomonas putida (strain W619).